The following is a 691-amino-acid chain: MAPFPEEVDVFTAPHWRTKQLVGLYCDKLSKTNFSNNNDFRALLQSLYATFKEFKMHEQIENEYIIGLLQQRSQTIYNVHSDNKLSEMLSLFEKGLKNVKNEYEQLNYAKQLKERLEAFTRDFLPHMKEEEEVFQPMLMEYFTYEELKDIKKKVIAQHCSQKDTAELLRGLSLWNHAEERQKFFKYSVDEKSDKEAEVSEHSTGITHLPPEVMLSIFSYLNPQELCRCSQVSMKWSQLTKTGSLWKHLYPVHWARGDWYSGPATGLDTEPDEEWVKNRKDESRAFHEWDEDADIDESEESVEESIAISIAQMEKRLLHGLIHNVLPYVGTSVKTLVLAYSSAVSSKMVRQILELCPNLEHLDLTQTDISDSAFDSWSWLGCCQSLRHLDLSGCEKITDVALEKISRALGILTSHQSGFLKTSTSKITSTTWKNKDVTMQSTKQYAYLHDLTNKGIGEEIDNEHPWTKPVSSENFTSPYLWMLDAEDLADIEDTVEWRHRNVESLCVVETASNFSCSTSGCFSKDIVGLRTSVCWQQHCASPAFAYCGHSFCCTGTALRTMSALPESSAMCRKASRTRLPRGKDLIYFGSEKSDQETGRVLLFLSLSGCYQITDHGLRVLTLGGGLPYLEHLNLSGCLTITGAGLQDLVSACPSLNDEYFYYCDNINGPHADTASGCQNLQCGFRACCRSGE.

Residues 1–159 (MAPFPEEVDV…IKKKVIAQHC (159 aa)) form a hemerythrin-like region. Positions 15, 57, 58, 61, 80, 126, and 130 each coordinate Fe(3+). The region spanning 202–248 (STGITHLPPEVMLSIFSYLNPQELCRCSQVSMKWSQLTKTGSLWKHL) is the F-box domain. LRR repeat units lie at residues 340–364 (SSAVSSKMVRQILELCPNLEHLDLT), 365–392 (QTDISDSAFDSWSWLGCCQSLRHLDLSG), 393–418 (CEKITDVALEKISRALGILTSHQSGF), 479–508 (LWMLDAEDLADIEDTVEWRHRNVESLCVVE), 576–607 (TRLPRGKDLIYFGSEKSDQETGRVLLFLSLSG), 608–635 (CYQITDHGLRVLTLGGGLPYLEHLNLSG), and 636–661 (CLTITGAGLQDLVSACPSLNDEYFYY). Positions 662, 676, 686, and 687 each coordinate [2Fe-2S] cluster.

In terms of assembly, part of a SCF (SKP1-cullin-F-box) protein ligase complex. Interacts with ACO1/IRP1, IREB2/IRP2; the interaction depends on the [2Fe-2S] cluster. Interacts with DCTN1/p150-glued. [2Fe-2S] cluster is required as a cofactor. Post-translationally, polybiquitinated upon iron and oxygen depletion, leading to its degradation by the proteasome. Ubiquitination is regulated by the hemerythrin-like region that acts as an oxygen and iron sensor. Undergoes constitutive ubiquitin-dependent degradation at the steady state by HERC2.

Its subcellular location is the cytoplasm. It is found in the perinuclear region. It localises to the nucleus. Its pathway is protein modification; protein ubiquitination. Its activity is regulated as follows. An iron-sulfur cluster promotes IRP2 polyubiquitination and degradation in response to both iron and oxygen concentrations. Functionally, component of some SCF (SKP1-cullin-F-box) protein ligase complex that plays a central role in iron homeostasis by promoting the ubiquitination and subsequent degradation of IREB2/IRP2. The C-terminal domain of FBXL5 contains a redox-sensitive [2Fe-2S] cluster that, upon oxidation, promotes binding to IRP2 to effect its oxygen-dependent degradation. Under iron deficiency conditions, the N-terminal hemerythrin-like (Hr) region, which contains a diiron metal center, cannot bind iron and undergoes conformational changes that destabilize the FBXL5 protein and cause its ubiquitination and degradation. When intracellular iron levels start rising, the Hr region is stabilized. Additional increases in iron levels facilitate the assembly and incorporation of a redox active [2Fe-2S] cluster in the C-terminal domain. Only when oxygen level is high enough to maintain the cluster in its oxidized state can FBXL5 recruit IRP2 as a substrate for polyubiquination and degradation. Promotes ubiquitination and subsequent degradation of the dynactin complex component DCTN1. Within the nucleus, promotes the ubiquitination of SNAI1; preventing its interaction with DNA and promoting its degradation. Negatively regulates DNA damage response by mediating the ubiquitin-proteasome degradation of the DNA repair protein NABP2. The chain is F-box/LRR-repeat protein 5 (FBXL5) from Pongo abelii (Sumatran orangutan).